The sequence spans 84 residues: U4-theraphotoxin-Hhn1a (84 aa).

An N-terminal signal peptide occupies residues 1–22; sequence MKVTLIAILTRAAVLVLHTTAA. The propeptide occupies 23–47; that stretch reads EELEESQLMEVSMPDTELAAVDEER. Disulfide bonds link cysteine 51-cysteine 65, cysteine 55-cysteine 76, and cysteine 70-cysteine 81.

The protein belongs to the neurotoxin 12 (Hwtx-2) family. 02 (Hwtx-2) subfamily. As to expression, expressed by the venom gland.

The protein resides in the secreted. Postsynaptic neurotoxin. The polypeptide is U4-theraphotoxin-Hhn1a (Cyriopagopus hainanus (Chinese bird spider)).